Here is a 61-residue protein sequence, read N- to C-terminus: Large ribosomal subunit protein uL30 (61 aa).

It belongs to the universal ribosomal protein uL30 family. In terms of assembly, part of the 50S ribosomal subunit.

The polypeptide is Large ribosomal subunit protein uL30 (Corynebacterium jeikeium (strain K411)).